The chain runs to 141 residues: Ribosome-binding factor A (141 aa).

The disordered stretch occupies residues 120–141 (DEALRAQSAGARPAGDEDPYKP).

This sequence belongs to the RbfA family. In terms of assembly, monomer. Binds 30S ribosomal subunits, but not 50S ribosomal subunits or 70S ribosomes.

It localises to the cytoplasm. One of several proteins that assist in the late maturation steps of the functional core of the 30S ribosomal subunit. Associates with free 30S ribosomal subunits (but not with 30S subunits that are part of 70S ribosomes or polysomes). Required for efficient processing of 16S rRNA. May interact with the 5'-terminal helix region of 16S rRNA. The sequence is that of Ribosome-binding factor A from Corynebacterium jeikeium (strain K411).